A 382-amino-acid chain; its full sequence is Protein RecA (382 aa).

79–86 (GPESSGKT) is an ATP binding site. The tract at residues 362 to 382 (ATKSAAKGSEVQADVKTKGAA) is disordered.

It belongs to the RecA family.

It localises to the cytoplasm. In terms of biological role, can catalyze the hydrolysis of ATP in the presence of single-stranded DNA, the ATP-dependent uptake of single-stranded DNA by duplex DNA, and the ATP-dependent hybridization of homologous single-stranded DNAs. It interacts with LexA causing its activation and leading to its autocatalytic cleavage. This Synechococcus sp. (strain WH7803) protein is Protein RecA.